The sequence spans 68 residues: uncharacterized protein (68 aa).

To B.subtilis XtrA.

This is an uncharacterized protein from Bacillus subtilis (strain 168).